The following is a 470-amino-acid chain: Sulfate adenylyltransferase subunit 1 (470 aa).

A tr-type G domain is found at 22-237 (KEVLRFITCG…LEEVPVKSEE (216 aa)). The tract at residues 31–38 (GSVDDGKS) is G1. Residue 31–38 (GSVDDGKS) participates in GTP binding. A G2 region spans residues 89–93 (GITID). The tract at residues 110-113 (DTPG) is G3. GTP contacts are provided by residues 110-114 (DTPGH) and 165-168 (NKMD). The segment at 165–168 (NKMD) is G4. The segment at 202–204 (SAK) is G5.

Belongs to the TRAFAC class translation factor GTPase superfamily. Classic translation factor GTPase family. CysN/NodQ subfamily. In terms of assembly, heterodimer composed of CysD, the smaller subunit, and CysN.

It catalyses the reaction sulfate + ATP + H(+) = adenosine 5'-phosphosulfate + diphosphate. It functions in the pathway sulfur metabolism; hydrogen sulfide biosynthesis; sulfite from sulfate: step 1/3. Functionally, with CysD forms the ATP sulfurylase (ATPS) that catalyzes the adenylation of sulfate producing adenosine 5'-phosphosulfate (APS) and diphosphate, the first enzymatic step in sulfur assimilation pathway. APS synthesis involves the formation of a high-energy phosphoric-sulfuric acid anhydride bond driven by GTP hydrolysis by CysN coupled to ATP hydrolysis by CysD. The sequence is that of Sulfate adenylyltransferase subunit 1 from Methylorubrum populi (strain ATCC BAA-705 / NCIMB 13946 / BJ001) (Methylobacterium populi).